A 362-amino-acid chain; its full sequence is 3-dehydroquinate synthase (362 aa).

NAD(+)-binding positions include 71 to 76 (DGEQYK), 105 to 109 (GVIGD), 129 to 130 (TT), lysine 142, lysine 151, and 169 to 172 (CLKT). Residues glutamate 184, histidine 247, and histidine 264 each coordinate Zn(2+).

Belongs to the sugar phosphate cyclases superfamily. Dehydroquinate synthase family. The cofactor is Co(2+). Zn(2+) is required as a cofactor. Requires NAD(+) as cofactor.

The protein localises to the cytoplasm. It catalyses the reaction 7-phospho-2-dehydro-3-deoxy-D-arabino-heptonate = 3-dehydroquinate + phosphate. It participates in metabolic intermediate biosynthesis; chorismate biosynthesis; chorismate from D-erythrose 4-phosphate and phosphoenolpyruvate: step 2/7. In terms of biological role, catalyzes the conversion of 3-deoxy-D-arabino-heptulosonate 7-phosphate (DAHP) to dehydroquinate (DHQ). The polypeptide is 3-dehydroquinate synthase (Salmonella enteritidis PT4 (strain P125109)).